The following is a 364-amino-acid chain: Probable dual-specificity RNA methyltransferase RlmN (364 aa).

Glu-106 serves as the catalytic Proton acceptor. The Radical SAM core domain maps to 112 to 350 (YPQRNTVCIS…SCTVRDTRGR (239 aa)). The cysteines at positions 119 and 356 are disulfide-linked. Positions 126, 130, and 133 each coordinate [4Fe-4S] cluster. S-adenosyl-L-methionine-binding positions include 177–178 (GE), Ser-211, 234–236 (SLH), and Asn-313. Catalysis depends on Cys-356, which acts as the S-methylcysteine intermediate.

This sequence belongs to the radical SAM superfamily. RlmN family. [4Fe-4S] cluster serves as cofactor.

The protein resides in the cytoplasm. The enzyme catalyses adenosine(2503) in 23S rRNA + 2 reduced [2Fe-2S]-[ferredoxin] + 2 S-adenosyl-L-methionine = 2-methyladenosine(2503) in 23S rRNA + 5'-deoxyadenosine + L-methionine + 2 oxidized [2Fe-2S]-[ferredoxin] + S-adenosyl-L-homocysteine. The catalysed reaction is adenosine(37) in tRNA + 2 reduced [2Fe-2S]-[ferredoxin] + 2 S-adenosyl-L-methionine = 2-methyladenosine(37) in tRNA + 5'-deoxyadenosine + L-methionine + 2 oxidized [2Fe-2S]-[ferredoxin] + S-adenosyl-L-homocysteine. Its function is as follows. Specifically methylates position 2 of adenine 2503 in 23S rRNA and position 2 of adenine 37 in tRNAs. In Mycobacterium ulcerans (strain Agy99), this protein is Probable dual-specificity RNA methyltransferase RlmN.